Consider the following 380-residue polypeptide: Probable RAD2-like endonuclease 076L (380 aa).

The tract at residues 1–101 (MGIKNLTQFL…QKIVSKTDAI (101 aa)) is N-domain. Mg(2+) is bound by residues aspartate 32, glutamate 73, glutamate 191, glutamate 193, aspartate 212, aspartate 214, and aspartate 281. The tract at residues 156–301 (IDRRRKYEFS…EKAYKYISDY (146 aa)) is I-domain.

Belongs to the XPG/RAD2 endonuclease family. Requires Mg(2+) as cofactor.

Its subcellular location is the host nucleus. Functionally, probable endonuclease. This chain is Probable RAD2-like endonuclease 076L, found in Invertebrate iridescent virus 3 (IIV-3).